Consider the following 1438-residue polypeptide: Pyochelin synthetase PchE (1438 aa).

Residues 6 to 85 enclose the Carrier 1 domain; it reads DSRTALRDWL…AWLDLLACAD (80 aa). Position 46 is an O-(pantetheine 4'-phosphoryl)serine (S46). The condensation/cyclization stretch occupies residues 136–442; the sequence is RTRDVDPQRL…ARRQGQPRSA (307 aa). Residues 563 to 950 are adenylation; it reads RAAEAPDADA…GRVDQQVKVR (388 aa). A Carrier 2 domain is found at 1350–1425; the sequence is EPLEAHEQAL…GLARHLQAQT (76 aa). At S1385 the chain carries O-(pantetheine 4'-phosphoryl)serine.

It belongs to the NRP synthetase family. Pantetheine 4'-phosphate serves as cofactor.

The enzyme catalyses holo-[peptidyl-carrier protein] + L-cysteine + ATP = L-cysteinyl-[peptidyl-carrier protein] + AMP + diphosphate. The protein operates within siderophore biosynthesis. It functions in the pathway antifungal biosynthesis. Involved in the biosynthesis of the siderophore pyochelin. Accepts salicylate activated by PchD at the first peptidyl carrier domain (ArCP), and activates and fixes one molecule of cysteine at the second peptidyl carrier domain (PCP1) via a thioester linkage to the phosphopanthetheine moiety. Then catalyzes the condensation reaction between the salicylate bound to the first site and the cysteine bound to the second site, and the cyclization of the cysteine to form the salicyl-thiazolinyl-S-PCP1 intermediate at the second site. When this intermediate is released by the action of a thioesterase, it produces the antifungal antibiotic dihydroaeruginoic acid (Dha or hydroxyphenyl-thiazolinyl-carboxylate). This is Pyochelin synthetase PchE from Pseudomonas aeruginosa (strain UCBPP-PA14).